The following is a 236-amino-acid chain: GTP cyclohydrolase 1 (236 aa).

The interval 1–52 (MAAARSCNGYARREGPPSPKLGTEKPRVSAGSGGSGDGWRGERPRSEEDNEL) is disordered. The Zn(2+) site is built by C127, H130, and C198.

It belongs to the GTP cyclohydrolase I family. Toroid-shaped homodecamer, composed of two pentamers of five dimers.

It is found in the cytoplasm. It localises to the nucleus. The catalysed reaction is GTP + H2O = 7,8-dihydroneopterin 3'-triphosphate + formate + H(+). It participates in cofactor biosynthesis; 7,8-dihydroneopterin triphosphate biosynthesis; 7,8-dihydroneopterin triphosphate from GTP: step 1/1. With respect to regulation, GTP shows a positive allosteric effect, and tetrahydrobiopterin inhibits the enzyme activity. Zinc is required for catalytic activity. Inhibited by Mg(2+). Functionally, may positively regulate nitric oxide synthesis in endothelial cells. May be involved in dopamine synthesis. May modify pain sensitivity and persistence. This chain is GTP cyclohydrolase 1 (GCH1), found in Gallus gallus (Chicken).